We begin with the raw amino-acid sequence, 189 residues long: Putative L,D-transpeptidase in ATP synthase subunits region ORF 5 (189 aa).

Positions 1-35 form a signal peptide, tat-type signal; that stretch reads MTDTLNRRAAMALGLASAAGAALATPALSQDAAPA. Residues 59–189 enclose the L,D-TPase catalytic domain; sequence PMLVADTFSR…CPVGTRVRVI (131 aa). Catalysis depends on H149, which acts as the Proton donor/acceptor. C165 (nucleophile) is an active-site residue.

Belongs to the YkuD family. In terms of processing, predicted to be exported by the Tat system. The position of the signal peptide cleavage has not been experimentally proven.

It participates in cell wall biogenesis; peptidoglycan biosynthesis. The sequence is that of Putative L,D-transpeptidase in ATP synthase subunits region ORF 5 from Fuscovulum blasticum (Rhodobacter blasticus).